The following is a 347-amino-acid chain: NADH-ubiquinone oxidoreductase chain 2 (347 aa).

10 consecutive transmembrane segments (helical) span residues proline 3–serine 23, tryptophan 26–methionine 46, serine 67–methionine 87, tyrosine 96–proline 116, leucine 149–glycine 169, isoleucine 178–threonine 198, leucine 200–isoleucine 220, isoleucine 239–glycine 259, asparagine 274–methionine 294, and leucine 325–isoleucine 345.

This sequence belongs to the complex I subunit 2 family. As to quaternary structure, core subunit of respiratory chain NADH dehydrogenase (Complex I) which is composed of 45 different subunits. Interacts with TMEM242.

It localises to the mitochondrion inner membrane. It catalyses the reaction a ubiquinone + NADH + 5 H(+)(in) = a ubiquinol + NAD(+) + 4 H(+)(out). In terms of biological role, core subunit of the mitochondrial membrane respiratory chain NADH dehydrogenase (Complex I) which catalyzes electron transfer from NADH through the respiratory chain, using ubiquinone as an electron acceptor. Essential for the catalytic activity and assembly of complex I. The protein is NADH-ubiquinone oxidoreductase chain 2 of Dasypus novemcinctus (Nine-banded armadillo).